The primary structure comprises 540 residues: CTP synthase (540 aa).

Positions Met-1–Leu-273 are amidoligase domain. Residue Ser-19 coordinates CTP. UTP is bound at residue Ser-19. Ser-20 to Ile-25 is a binding site for ATP. Tyr-60 serves as a coordination point for L-glutamine. An ATP-binding site is contributed by Asp-77. Mg(2+) contacts are provided by Asp-77 and Glu-147. Residues Asp-154 to Glu-156, Lys-194 to Gln-199, and Lys-230 contribute to the CTP site. Residues Lys-194 to Gln-199 and Lys-230 each bind UTP. A Glutamine amidotransferase type-1 domain is found at Tyr-306 to Asn-539. Gly-361 provides a ligand contact to L-glutamine. The Nucleophile; for glutamine hydrolysis role is filled by Cys-388. Residues Leu-389 to Gln-392, Glu-412, and Arg-466 contribute to the L-glutamine site. Catalysis depends on residues His-512 and Glu-514.

Belongs to the CTP synthase family. Homotetramer.

The catalysed reaction is UTP + L-glutamine + ATP + H2O = CTP + L-glutamate + ADP + phosphate + 2 H(+). It catalyses the reaction L-glutamine + H2O = L-glutamate + NH4(+). It carries out the reaction UTP + NH4(+) + ATP = CTP + ADP + phosphate + 2 H(+). Its pathway is pyrimidine metabolism; CTP biosynthesis via de novo pathway; CTP from UDP: step 2/2. Allosterically activated by GTP, when glutamine is the substrate; GTP has no effect on the reaction when ammonia is the substrate. The allosteric effector GTP functions by stabilizing the protein conformation that binds the tetrahedral intermediate(s) formed during glutamine hydrolysis. Inhibited by the product CTP, via allosteric rather than competitive inhibition. In terms of biological role, catalyzes the ATP-dependent amination of UTP to CTP with either L-glutamine or ammonia as the source of nitrogen. Regulates intracellular CTP levels through interactions with the four ribonucleotide triphosphates. This is CTP synthase from Onion yellows phytoplasma (strain OY-M).